A 1411-amino-acid chain; its full sequence is MKSLKSRLWKQDAPGPTSPSSPTAVASTQSAEWNKYDDRLMKAAERGDVEKVSSILAKKGVHPGKLDVEGRSAFHVVASKGNLECLNAILTHGIDVATRDSAGRNALHLAAKYGHALCLQKLLQYNCPTEHVDLQGRTALHDAVMADCPSSIQLLCDHGASVNAKDIDGRTPLVLATQMCRPTICQLLIDRGADVNSRDKQNRTALMLGCEYGCRDAVEVLVKNGADLTLLDALGHDSSYYARIGDNLDILNLLKTASENTNKGRELWRKGPPLQQRNLSHTQDEGSVKSTQREQREPHSFQDLEIENEDLREKLRKIQQEQRILLDKVNGLQLQLNEEVMVADDLESEREKPKSLLAAKEKQHEESLRTIEALKNRFKYFESDHPGPGSYPSNRKEDMLHKQGQMYTTEPQCASPGIPPHMHSRSMLRPLELSLPSQTSYSENEILKKELETLRTYYDSAKQDRLKFQNELAHKVAECKALALECERVKEDSDEQIKQLEDALKDVQKRMYESEGKVKQMQTHFLALKEHLTNEAATGSHRIIEELREQLKDLKGKYEGASAEVGKLRSQIKQSEMLVGEFKRDEGRLVEENKRLQKECGTCEVELERRGRRVVELEGQLKELGAKLALSVPTEKFESMKSSLSNDINEKVKRLAEVGRDYESAQGEIRQLKRDLESVRAQHIRPEEHEQLRSRLEQKSGELGKKVSELTLKNQTLQKDVEKLHADNKLLNQQVHSLTVEMKTRYVPLRVSEEMKRSHDVNVEDLNKKLSEATQRYAEKKQEAERLLAENDKLTKNVSRLEAVFVAPEKHEKELMGLKSNIAELKKQLSELNKKCGEGQEKIRALMSENSSLKKTLSSQYVPAKTHEEVKASLNSTVEKTNRALLEAKKRFDDTSQEVSKLRDENEVLRRNLENVQNQMKADYVSLEEHSRRMSTVSQSLKEAQEANAAILADHRQGQEEIVSLHAEIKAQKKELDTIQECIKLKYAPLARLEECERKFKATEKGLKEQLSEQTHKCRQRDEEVKKGKQENERLRADLAALQKELQDRNALAEEAREAERALSGKADELSKQLKDLSQKYSDVKSEREKLVEEKAKQASEILAAQNLLQKQPVPLEQVEALKKSLNGTIEQLKEELRSKQRCLEREQQTVSQLQQLLENQKNSSVTLAEHLKLKEALEKEVGIMKASLREKEEESQKKTKEVSKLQTEVQTTKQALKNLETREVVDMSKYKATKNDLETQISNLNDKLASLNRKYDQACEEKVSAKDEKELLHLSIEQEIRDQKERCDKSLTTIMELQQRIQESAKQIEAKDNKITELLNDVERLKQALNGLSQLTYSSGSPTKRQSQLVDTLQQRVRDLQQQLADADRQHQEVIAIYRTHLLSAAQGHMDEDVQAALLQIIQMRQGLVC.

Residue M1 is modified to N-acetylmethionine. The tract at residues 1–30 is disordered; the sequence is MKSLKSRLWKQDAPGPTSPSSPTAVASTQS. Positions 13–30 are enriched in low complexity; the sequence is APGPTSPSSPTAVASTQS. ANK repeat units follow at residues 69–98, 102–131, 135–164, 168–197, 201–230, and 234–263; these read EGRS…DVAT, AGRN…PTEH, QGRT…SVNA, DGRT…DVNS, QNRT…DLTL, and LGHD…NTNK. A disordered region spans residues 263–301; it reads KGRELWRKGPPLQQRNLSHTQDEGSVKSTQREQREPHSF. Residue S280 is modified to Phosphoserine. Basic and acidic residues predominate over residues 282–301; the sequence is TQDEGSVKSTQREQREPHSF. 3 coiled-coil regions span residues 299–379, 442–624, and 652–1380; these read HSFQ…NRFK, SENE…LKEL, and VKRL…AIYR. Residues 1006–1031 form a disordered region; the sequence is GLKEQLSEQTHKCRQRDEEVKKGKQE.

As to quaternary structure, component of the apoptosome complex, composed of APAF1, pro-caspase-9 and UACA. In the complex, it probably interacts directly with APAF1. Interacts with LGALS3, ARF6 and ACTB. Interacts with RAB39A. As to expression, highly expressed in heart, liver, kidney and testis. Weakly expressed in lung and skeletal muscle. Not expressed in brain and spleen.

Its subcellular location is the nucleus. It localises to the cytoplasm. The protein localises to the cytoskeleton. Its function is as follows. Regulates APAF1 expression and plays an important role in the regulation of stress-induced apoptosis. Promotes apoptosis by regulating three pathways, apoptosome up-regulation, LGALS3/galectin-3 down-regulation and NF-kappa-B inactivation. Regulates the redistribution of APAF1 into the nucleus after proapoptotic stress. Down-regulates the expression of LGALS3 by inhibiting NFKB1. Functionally, modulates isoactin dynamics to regulate the morphological alterations required for cell growth and motility. Interaction with ARF6 may modulate cell shape and motility after injury. May be involved in multiple neurite formation. This chain is Uveal autoantigen with coiled-coil domains and ankyrin repeats (Uaca), found in Mus musculus (Mouse).